The following is a 282-amino-acid chain: Probable endonuclease 4 (282 aa).

Zn(2+)-binding residues include His-66, His-106, Glu-143, Asp-177, His-180, His-214, Asp-227, His-229, and Glu-259.

This sequence belongs to the AP endonuclease 2 family. It depends on Zn(2+) as a cofactor.

The catalysed reaction is Endonucleolytic cleavage to 5'-phosphooligonucleotide end-products.. Its function is as follows. Endonuclease IV plays a role in DNA repair. It cleaves phosphodiester bonds at apurinic or apyrimidinic (AP) sites, generating a 3'-hydroxyl group and a 5'-terminal sugar phosphate. The sequence is that of Probable endonuclease 4 from Nitratidesulfovibrio vulgaris (strain DP4) (Desulfovibrio vulgaris).